Reading from the N-terminus, the 421-residue chain is PDZ and LIM domain protein 7 (421 aa).

Positions Met1–Ala85 constitute a PDZ domain. The tract at residues Ile115 to Trp193 is disordered. Residues Tyr147–Lys172 show a composition bias toward polar residues. LIM zinc-binding domains follow at residues Pro244–Ala302, Pro303–Thr362, and Lys363–Val421.

It localises to the cytoplasm. It is found in the cytoskeleton. In terms of biological role, may function as a scaffold on which the coordinated assembly of proteins can occur. May play a role as an adapter that, via its PDZ domain, localizes LIM-binding proteins to actin filaments of both skeletal muscle and nonmuscle tissues. This is PDZ and LIM domain protein 7 (pdlim7) from Xenopus laevis (African clawed frog).